Consider the following 161-residue polypeptide: MNRVLYPGTFDPITKGHGDLVERASRLFDHVIIAVAASPKKNPLFPLEQRVELAREVTKHLPNVEVIGFSSLLAHFAKEQGANVFLRGLRAVSDFEYEFQLANMNRQLAPDVESLFLTPSERYSFISSTLVREIAALGGDISKFVHPVVADALTERFKKQA.

Residue Thr-9 participates in substrate binding. Residues 9–10 and His-17 contribute to the ATP site; that span reads TF. Residues Lys-41, Leu-73, and Arg-87 each contribute to the substrate site. Residues 88–90, Glu-98, and 123–129 each bind ATP; these read GLR and YSFISST.

The protein belongs to the bacterial CoaD family. Homohexamer. It depends on Mg(2+) as a cofactor.

It is found in the cytoplasm. It catalyses the reaction (R)-4'-phosphopantetheine + ATP + H(+) = 3'-dephospho-CoA + diphosphate. The protein operates within cofactor biosynthesis; coenzyme A biosynthesis; CoA from (R)-pantothenate: step 4/5. Reversibly transfers an adenylyl group from ATP to 4'-phosphopantetheine, yielding dephospho-CoA (dPCoA) and pyrophosphate. The polypeptide is Phosphopantetheine adenylyltransferase (Pseudomonas putida (strain ATCC 47054 / DSM 6125 / CFBP 8728 / NCIMB 11950 / KT2440)).